A 457-amino-acid chain; its full sequence is Adenylosuccinate synthetase isozyme 2 B (457 aa).

GTP contacts are provided by residues 40-46 and 68-70; these read GDEGKGK and GHT. D41 functions as the Proton acceptor in the catalytic mechanism. Residues D41 and G68 each contribute to the Mg(2+) site. Residue D41 coordinates substrate. IMP is bound by residues 41 to 44, 66 to 69, T163, R177, N256, T271, and R335; these read DEGK and NAGH. H69 (proton donor) is an active-site residue. 331-337 is a binding site for substrate; sequence VTTGRKR. GTP-binding positions include R337, 363 to 365, and 445 to 448; these read KLD and GVGK.

It belongs to the adenylosuccinate synthetase family. In terms of assembly, homodimer. Mg(2+) is required as a cofactor.

The protein localises to the cytoplasm. It is found in the mitochondrion. It carries out the reaction IMP + L-aspartate + GTP = N(6)-(1,2-dicarboxyethyl)-AMP + GDP + phosphate + 2 H(+). Its pathway is purine metabolism; AMP biosynthesis via de novo pathway; AMP from IMP: step 1/2. Its activity is regulated as follows. Inhibited competitively by AMP and IMP and non-competitively by fructose 1,6-bisphosphate. In terms of biological role, plays an important role in the de novo pathway and in the salvage pathway of purine nucleotide biosynthesis. Catalyzes the first committed step in the biosynthesis of AMP from IMP. The chain is Adenylosuccinate synthetase isozyme 2 B (adss2-b) from Xenopus tropicalis (Western clawed frog).